Here is a 759-residue protein sequence, read N- to C-terminus: Cullin-4A (759 aa).

A Glycyl lysine isopeptide (Lys-Gly) (interchain with G-Cter in SUMO2) cross-link involves residue Lys8. Ser10 carries the post-translational modification Phosphoserine. Lys33 is covalently cross-linked (Glycyl lysine isopeptide (Lys-Gly) (interchain with G-Cter in ubiquitin)). Residues 691 to 751 (DRQYQIDAAI…RDYMERDKDN (61 aa)) enclose the Cullin neddylation domain. Lys705 is covalently cross-linked (Glycyl lysine isopeptide (Lys-Gly) (interchain with G-Cter in NEDD8)).

The protein belongs to the cullin family. As to quaternary structure, can self-associate. Component of multiple DCX (DDB1-CUL4-X-box) E3 ubiquitin-protein ligase complexes that seem to consist of DDB1, CUL4A or CUL4B, RBX1 and a variable substrate recognition component which seems to belong to a protein family described as DCAF (Ddb1- and Cul4-associated factor) or CDW (CUL4-DDB1-associated WD40-repeat) proteins. Component of the CSA complex (DCX(ERCC8) complex) containing ERCC8, RBX1, DDB1 and CUL4A; the CSA complex interacts with RNA polymerase II; upon UV irradiation it interacts with the COP9 signalosome and preferentially with the hyperphosphorylated form of RNA polymerase II. Component of the DCX(DET1-COP1) complex with the substrate recognition component DET1 and COP1. Component of the DCX(DDB2) complex with the substrate recognition component DDB2. Component of the DCX(DTL) complex with the putative substrate recognition component DTL. Component of DCX complexes part of the DesCEND (destruction via C-end degrons) pathway, which contain either TRPC4AP or DCAF12 as substrate-recognition component. Component of the DCX(AMBRA1) complex with the substrate recognition component AMBRA1. Interacts with DDB1, RBX1, RNF7, CDT1, TIP120A/CAND1, SKP2, CDKN1B, MDM2, TP53 and HOXA9. Interacts with DDB2; the interactions with DDB2 and CAND1 are mutually exclusive. Interacts with DCAF1, DTL, DDA1, DCAF6, DCAF4, DCAF16, DCAF17, DET1, WDTC1, DCAF5, DCAF11, WDR24A, COP1, PAFAH1B1, ERCC8, GRWD1, FBXW5, RBBP7, GNB2, WSB1, WSB2, NUP43, PWP1, FBXW8, ATG16L1, KATNB1, RBBP4, RBBP5, LRWD1 and DCAF8. May interact with WDR26, WDR51B, SNRNP40, WDR61, WDR76, WDR5. Interacts (when neddylated) with ARIH1; leading to activate the E3 ligase activity of ARIH1. The DDB1-CUL4A complex interacts with CRY1. Interacts (unneddylated form) with DCUN1D1, DCUN1D2, DCUN1D3, DCUN1D4 and DCUN1D5; these interactions promote the cullin neddylation. (Microbial infection) Interacts with Epstein-Barr virus BPLF1. In terms of processing, neddylated; required for activity of cullin-RING-based E3 ubiquitin-protein ligase complexes. Deneddylated via its interaction with the COP9 signalosome (CSN) complex. (Microbial infection) Deneddylated by Epstein-Barr virus BPLF1 leading to a S-phase-like environment that is required for efficient replication of the viral genome.

It participates in protein modification; protein ubiquitination. Functionally, core component of multiple cullin-RING-based E3 ubiquitin-protein ligase complexes which mediate the ubiquitination of target proteins. As a scaffold protein may contribute to catalysis through positioning of the substrate and the ubiquitin-conjugating enzyme. The E3 ubiquitin-protein ligase activity of the complex is dependent on the neddylation of the cullin subunit and is inhibited by the association of the deneddylated cullin subunit with TIP120A/CAND1. The functional specificity of the E3 ubiquitin-protein ligase complex depends on the variable substrate recognition component. DCX(DET1-COP1) directs ubiquitination of JUN. DCX(DDB2) directs ubiquitination of XPC. DCX(DDB2) ubiquitinates histones H3-H4 and is required for efficient histone deposition during replication-coupled (H3.1) and replication-independent (H3.3) nucleosome assembly, probably by facilitating the transfer of H3 from ASF1A/ASF1B to other chaperones involved in histone deposition. DCX(DTL) plays a role in PCNA-dependent polyubiquitination of CDT1 and MDM2-dependent ubiquitination of p53/TP53 in response to radiation-induced DNA damage and during DNA replication. DCX(DTL) directs autoubiquitination of DTL. In association with DDB1 and SKP2 probably is involved in ubiquitination of CDKN1B/p27kip. Is involved in ubiquitination of HOXA9. The DDB1-CUL4A-DTL E3 ligase complex regulates the circadian clock function by mediating the ubiquitination and degradation of CRY1. The DCX(ERCC8) complex (also named CSA complex) plays a role in transcription-coupled repair (TCR). A number of DCX complexes (containing either TRPC4AP or DCAF12 as substrate-recognition component) are part of the DesCEND (destruction via C-end degrons) pathway, which recognizes a C-degron located at the extreme C terminus of target proteins, leading to their ubiquitination and degradation. The DCX(AMBRA1) complex is a master regulator of the transition from G1 to S cell phase by mediating ubiquitination of phosphorylated cyclin-D (CCND1, CCND2 and CCND3). The DCX(AMBRA1) complex also acts as a regulator of Cul5-RING (CRL5) E3 ubiquitin-protein ligase complexes by mediating ubiquitination and degradation of Elongin-C (ELOC) component of CRL5 complexes. With CUL4B, contributes to ribosome biogenesis. The chain is Cullin-4A from Homo sapiens (Human).